The sequence spans 288 residues: Pyridoxal kinase PdxY (288 aa).

Substrate contacts are provided by residues Ser-12 and 47–48; that span reads TQ. Residues Asp-114, Glu-151, Lys-184, and 211–214 contribute to the ATP site; that span reads RPLL. Asp-225 contributes to the substrate binding site.

It belongs to the pyridoxine kinase family. PdxY subfamily. Homodimer. It depends on Mg(2+) as a cofactor.

The catalysed reaction is pyridoxal + ATP = pyridoxal 5'-phosphate + ADP + H(+). It functions in the pathway cofactor metabolism; pyridoxal 5'-phosphate salvage; pyridoxal 5'-phosphate from pyridoxal: step 1/1. Its function is as follows. Pyridoxal kinase involved in the salvage pathway of pyridoxal 5'-phosphate (PLP). Catalyzes the phosphorylation of pyridoxal to PLP. The polypeptide is Pyridoxal kinase PdxY (Pseudomonas syringae pv. syringae (strain B728a)).